The sequence spans 101 residues: Small ubiquitin-related modifier 1 (101 aa).

S2 is modified (N-acetylserine). Residue S2 is modified to Phosphoserine. Residue K7 forms a Glycyl lysine isopeptide (Lys-Gly) (interchain with G-Cter in SUMO1); alternate linkage. K7 participates in a covalent cross-link: Glycyl lysine isopeptide (Lys-Gly) (interchain with G-Cter in SUMO2); alternate. Residue S9 is modified to Phosphoserine. Residues K16, K17, and K23 each participate in a glycyl lysine isopeptide (Lys-Gly) (interchain with G-Cter in SUMO2) cross-link. The region spanning 20–97 (EYIKLKVIGQ…IEVYQEQTGG (78 aa)) is the Ubiquitin-like domain. Residue K25 forms a Glycyl lysine isopeptide (Lys-Gly) (interchain with G-Cter in SUMO1) linkage. S32 is modified (phosphoserine). Residues K37, K39, K45, and K46 each participate in a glycyl lysine isopeptide (Lys-Gly) (interchain with G-Cter in SUMO2) cross-link. A Glycyl lysine isopeptide (Gly-Lys) (interchain with K-? in acceptor proteins) cross-link involves residue G97. A propeptide spanning residues 98–101 (HSNV) is cleaved from the precursor.

Belongs to the ubiquitin family. SUMO subfamily. As to quaternary structure, covalently attached to KCNB1; UBE2I increases cross-linking with KCNB1 and PIAS1 decreases cross-links with KCNB1. Interacts with SAE2, RANBP2, PIAS1 and PIAS2. Interacts with PRKN. Covalently attached to a number of proteins such as IKFZ1, PML, RANGAP1, HIPK2, SP100, p53, p73-alpha, MDM2, JUN, DNMT3B and TDG. Also interacts with HIF1A, HIPK2, HIPK3, CHD3, EXOSC9, RAD51 and RAD52. Interacts with USP25 (via ts SIM domain); the interaction weakly sumoylates USP25. Interacts with SIMC1, CASP8AP2, RNF111 and SOBP (via SIM domains). Interacts with BHLHE40/DEC1. Interacts with RWDD3. Interacts with UBE2I/UBC9 and this interaction is enhanced in the presence of RWDD3. Interacts with MTA1. Interacts with SENP2. Interacts with HINT1. Cleavage of precursor form by SENP1 or SENP2 is necessary for function. In terms of processing, polymeric SUMO1 chains undergo polyubiquitination by RNF4.

It is found in the nucleus membrane. Its subcellular location is the nucleus speckle. It localises to the cytoplasm. The protein localises to the nucleus. The protein resides in the PML body. It is found in the cell membrane. Ubiquitin-like protein that can be covalently attached to proteins as a monomer or a lysine-linked polymer. Covalent attachment via an isopeptide bond to its substrates requires prior activation by the E1 complex SAE1-SAE2 and linkage to the E2 enzyme UBE2I, and can be promoted by E3 ligases such as PIAS1-4, RANBP2 or CBX4. This post-translational modification on lysine residues of proteins plays a crucial role in a number of cellular processes such as nuclear transport, DNA replication and repair, mitosis and signal transduction. Involved for instance in targeting RANGAP1 to the nuclear pore complex protein RANBP2. Covalently attached to the voltage-gated potassium channel KCNB1; this modulates the gating characteristics of KCNB1. Polymeric SUMO1 chains are also susceptible to polyubiquitination which functions as a signal for proteasomal degradation of modified proteins. May be involved in modified proteins. May also regulate a network of genes involved in palate development. Covalently attached to ZFHX3. The polypeptide is Small ubiquitin-related modifier 1 (SUMO1) (Ictidomys tridecemlineatus (Thirteen-lined ground squirrel)).